The primary structure comprises 586 residues: Nucleus accumbens-associated protein 2 (586 aa).

A BTB domain is found at 30–94 (CDVSIVVKGQ…CYTGKLTMAA (65 aa)). Residue K171 forms a Glycyl lysine isopeptide (Lys-Gly) (interchain with G-Cter in SUMO2) linkage. Residues 177 to 196 (MPPASGPGLASKRPLETGPR) are disordered. K215 participates in a covalent cross-link: Glycyl lysine isopeptide (Lys-Gly) (interchain with G-Cter in SUMO2). The interval 236–272 (QVPYPPGERTSPGASSLPTTDSPTSYHNEEDEEDDEA) is disordered. Residues 247-261 (PGASSLPTTDSPTSY) are compositionally biased toward polar residues. Residues K297, K427, and K454 each participate in a glycyl lysine isopeptide (Lys-Gly) (interchain with G-Cter in SUMO2) cross-link. Residues 349 to 446 (GSGVYITRGQ…DMCTNARRVR (98 aa)) enclose the BEN domain. The interval 542 to 586 (APEQLPADGQSSPQAFEQGNTSSSRPQTPVATATRRPEGTYAGTL) is disordered. Residues 550-572 (GQSSPQAFEQGNTSSSRPQTPVA) show a composition bias toward polar residues.

In terms of assembly, homooligomer; mediated by the BTB domain. Interacts with the NuRD complex. Interacts (via C-terminal part) with HDAC2. Interacts (via BTB domain) with MTA1, MTA2 and MTA3.

It is found in the nucleus. Its function is as follows. Functions as a transcriptional repressor through its association with the NuRD complex. Recruits the NuRD complex to the promoter of MDM2, leading to the repression of MDM2 transcription and subsequent stability of p53/TP53. The protein is Nucleus accumbens-associated protein 2 (Nacc2) of Mus musculus (Mouse).